The primary structure comprises 1384 residues: Enhancer of mRNA-decapping protein 4 (1384 aa).

4 WD repeats span residues 171–211 (GFTG…SKIQ), 227–274 (NSNR…SNNS), 292–331 (GHAA…QDQP), and 340–390 (HNGQ…CLQT). 3 disordered regions span residues 471 to 494 (TEVL…TSES), 551 to 584 (AMSS…SPAP), and 796 to 931 (AGAA…MSTE). A compositionally biased stretch (polar residues) spans 482 to 494 (SMTAEGNQGTSES). Over residues 834 to 844 (CSREEIKDRHI) the composition is skewed to basic and acidic residues. Polar residues-rich tracts occupy residues 854–866 (HLTQ…ASAE) and 918–931 (SSQS…MSTE). Residues 930–1012 (TEVQDELLQM…QQLQDQLVQQ (83 aa)) are a coiled coil.

The protein belongs to the WD repeat EDC4 family.

It localises to the cytoplasm. It is found in the P-body. Its subcellular location is the nucleus. Functionally, in the process of mRNA degradation, seems to play a role in mRNA decapping. This chain is Enhancer of mRNA-decapping protein 4 (edc4), found in Danio rerio (Zebrafish).